The sequence spans 500 residues: Histidine--tRNA ligase (500 aa).

The protein belongs to the class-II aminoacyl-tRNA synthetase family. Homodimer.

The protein resides in the cytoplasm. It carries out the reaction tRNA(His) + L-histidine + ATP = L-histidyl-tRNA(His) + AMP + diphosphate + H(+). This Mesorhizobium japonicum (strain LMG 29417 / CECT 9101 / MAFF 303099) (Mesorhizobium loti (strain MAFF 303099)) protein is Histidine--tRNA ligase (hisS).